Consider the following 446-residue polypeptide: uncharacterized protein (446 aa).

Transmembrane regions (helical) follow at residues 69-89 (FWLW…VTYL), 98-118 (FFLV…VWLA), 169-189 (HSLW…LLLV), and 247-267 (GLLV…AWVV).

It is found in the membrane. This is an uncharacterized protein from Neisseria meningitidis serogroup B (strain ATCC BAA-335 / MC58).